The primary structure comprises 199 residues: Recombination protein RecR (199 aa).

Residues 57–72 (CQACRTFTEETLCPIC) form a C4-type zinc finger. One can recognise a Toprim domain in the interval 81–176 (EVICVVETPA…SVSRIAHGVP (96 aa)).

The protein belongs to the RecR family.

In terms of biological role, may play a role in DNA repair. It seems to be involved in an RecBC-independent recombinational process of DNA repair. It may act with RecF and RecO. This Shewanella woodyi (strain ATCC 51908 / MS32) protein is Recombination protein RecR.